The primary structure comprises 446 residues: tRNA-2-methylthio-N(6)-dimethylallyladenosine synthase (446 aa).

The MTTase N-terminal domain maps to 6 to 122; the sequence is RRYHITTFGC…LGDLLQQVFD (117 aa). Cysteine 15, cysteine 51, cysteine 85, cysteine 157, cysteine 161, and cysteine 164 together coordinate [4Fe-4S] cluster. Residues 143–380 enclose the Radical SAM core domain; the sequence is RDSNITAWVN…NHLVATKAAE (238 aa). The TRAM domain maps to 383-446; it reads QRYLGRIEEI…RPFSLTGVIF (64 aa).

The protein belongs to the methylthiotransferase family. MiaB subfamily. In terms of assembly, monomer. [4Fe-4S] cluster is required as a cofactor.

The protein resides in the cytoplasm. The catalysed reaction is N(6)-dimethylallyladenosine(37) in tRNA + (sulfur carrier)-SH + AH2 + 2 S-adenosyl-L-methionine = 2-methylsulfanyl-N(6)-dimethylallyladenosine(37) in tRNA + (sulfur carrier)-H + 5'-deoxyadenosine + L-methionine + A + S-adenosyl-L-homocysteine + 2 H(+). Functionally, catalyzes the methylthiolation of N6-(dimethylallyl)adenosine (i(6)A), leading to the formation of 2-methylthio-N6-(dimethylallyl)adenosine (ms(2)i(6)A) at position 37 in tRNAs that read codons beginning with uridine. The polypeptide is tRNA-2-methylthio-N(6)-dimethylallyladenosine synthase (Microcystis aeruginosa (strain NIES-843 / IAM M-2473)).